An 84-amino-acid chain; its full sequence is Large ribosomal subunit protein bL27 (84 aa).

Positions 1-25 (MAHKKAGGSSRNGRDSNGQRRGVKR) are disordered.

The protein belongs to the bacterial ribosomal protein bL27 family.

In Desulfatibacillum aliphaticivorans, this protein is Large ribosomal subunit protein bL27.